Here is a 305-residue protein sequence, read N- to C-terminus: Ferrochelatase (305 aa).

Positions 182 and 262 each coordinate Fe cation.

The protein belongs to the ferrochelatase family.

Its subcellular location is the cytoplasm. It carries out the reaction heme b + 2 H(+) = protoporphyrin IX + Fe(2+). Its pathway is porphyrin-containing compound metabolism; protoheme biosynthesis; protoheme from protoporphyrin-IX: step 1/1. Catalyzes the ferrous insertion into protoporphyrin IX. The sequence is that of Ferrochelatase from Herpetosiphon aurantiacus (strain ATCC 23779 / DSM 785 / 114-95).